Here is a 944-residue protein sequence, read N- to C-terminus: UvrABC system protein A (944 aa).

Gly-33–Ser-40 provides a ligand contact to ATP. The segment at Cys-252–Cys-279 adopts a C4-type zinc-finger fold. ABC transporter domains follow at residues Trp-309 to Leu-587 and Ile-607 to Lys-935. An ATP-binding site is contributed by Gly-639–Ser-646. The C4-type zinc finger occupies Cys-738 to Cys-764.

The protein belongs to the ABC transporter superfamily. UvrA family. As to quaternary structure, forms a heterotetramer with UvrB during the search for lesions.

The protein localises to the cytoplasm. The UvrABC repair system catalyzes the recognition and processing of DNA lesions. UvrA is an ATPase and a DNA-binding protein. A damage recognition complex composed of 2 UvrA and 2 UvrB subunits scans DNA for abnormalities. When the presence of a lesion has been verified by UvrB, the UvrA molecules dissociate. The sequence is that of UvrABC system protein A from Staphylococcus epidermidis (strain ATCC 35984 / DSM 28319 / BCRC 17069 / CCUG 31568 / BM 3577 / RP62A).